The sequence spans 709 residues: Ribosomal RNA large subunit methyltransferase K/L (709 aa).

The THUMP domain occupies leucine 43–phenylalanine 154.

It belongs to the methyltransferase superfamily. RlmKL family.

It is found in the cytoplasm. It carries out the reaction guanosine(2445) in 23S rRNA + S-adenosyl-L-methionine = N(2)-methylguanosine(2445) in 23S rRNA + S-adenosyl-L-homocysteine + H(+). The catalysed reaction is guanosine(2069) in 23S rRNA + S-adenosyl-L-methionine = N(2)-methylguanosine(2069) in 23S rRNA + S-adenosyl-L-homocysteine + H(+). Its function is as follows. Specifically methylates the guanine in position 2445 (m2G2445) and the guanine in position 2069 (m7G2069) of 23S rRNA. The sequence is that of Ribosomal RNA large subunit methyltransferase K/L from Shewanella baltica (strain OS195).